The chain runs to 101 residues: Stefin-C (101 aa).

M1 carries the post-translational modification N-acetylmethionine. The short motif at 49–53 (QVVAG) is the Secondary area of contact element.

Belongs to the cystatin family.

The protein localises to the cytoplasm. In terms of biological role, strong inhibitor of papain and cathepsin L but poor inhibitor of cathepsin B. This chain is Stefin-C, found in Bos taurus (Bovine).